Reading from the N-terminus, the 125-residue chain is Protein ApaG (125 aa).

Residues 1-125 (MINSPRVCVQ…FRLAVPTLIH (125 aa)) enclose the ApaG domain.

This Klebsiella pneumoniae (strain 342) protein is Protein ApaG.